Consider the following 587-residue polypeptide: Cyclic di-GMP phosphodiesterase PA2567 (587 aa).

The region spanning 28 to 157 (DEVFEEILAA…LEHFARLVMA (130 aa)) is the GAF domain. One can recognise a GGDEF domain in the interval 192-327 (GALTVIAADL…GVGWARYNPP (136 aa)). Positions 335–587 (AFTLLTSLSQ…PEQLEDWLRR (253 aa)) constitute an EAL domain.

The catalysed reaction is 3',3'-c-di-GMP + H2O = 5'-phosphoguanylyl(3'-&gt;5')guanosine + H(+). Functionally, phosphodiesterase (PDE) that catalyzes the hydrolysis of cyclic diguanylate (c-di-GMP) to 5'-pGpG. The sequence is that of Cyclic di-GMP phosphodiesterase PA2567 from Pseudomonas aeruginosa (strain ATCC 15692 / DSM 22644 / CIP 104116 / JCM 14847 / LMG 12228 / 1C / PRS 101 / PAO1).